The chain runs to 38 residues: Large ribosomal subunit protein bL36 (38 aa).

Belongs to the bacterial ribosomal protein bL36 family.

The chain is Large ribosomal subunit protein bL36 from Roseiflexus sp. (strain RS-1).